Here is a 521-residue protein sequence, read N- to C-terminus: Vang-like protein 2 (521 aa).

Residues 1–81 (MDTESQYSGY…TTVVTGTSEH (81 aa)) are disordered. Residues 1–108 (MDTESQYSGY…VPLDCSRHLG (108 aa)) lie on the Cytoplasmic side of the membrane. Residues 15 to 33 (GHSRSSRKHRDRRDRHRSK) show a composition bias toward basic residues. The span at 57-67 (ESTRGDERDDN) shows a compositional bias: basic and acidic residues. Positions 69-81 (GETTTVVTGTSEH) are enriched in low complexity. A helical transmembrane segment spans residues 109 to 129 (VAAGATLALLSFLTPLAFLLL). Over 130–147 (PPLLWREELEPCGTACEG) the chain is Extracellular. The chain crosses the membrane as a helical span at residues 148 to 168 (LFISVAFKLLILLLGSWALFF). Over 169 to 178 (RRPKASLPRV) the chain is Cytoplasmic. A helical transmembrane segment spans residues 179–199 (FVLRALLMVLVFLLVVSYWLF). The Extracellular segment spans residues 200–217 (YGVRILDARERSYQGVVQ). The chain crosses the membrane as a helical span at residues 218-238 (FAVSLVDALLFVHYLAVVLLE). Topologically, residues 239 to 521 (LRQLQPQFTL…VMRLQSETSV (283 aa)) are cytoplasmic.

The protein belongs to the Vang family. As to quaternary structure, homodimer and heterodimer with VANGL1. Interacts through its C-terminal region with the N-terminal half of DVL1, DVL2 and DVL3. The PDZ domain of DVL1, DVL2 and DVL3 is required for the interaction. Also interacts with the PDZ domains of MAGI3, SCRIB/SCRB1 and FZD3. Interacts with PRICKLE3.

It localises to the cell membrane. Functionally, involved in the control of early morphogenesis and patterning of both axial midline structures and the development of neural plate. Plays a role in the regulation of planar cell polarity, particularly in the orientation of stereociliary bundles in the cochlea. Required for polarization and movement of myocardializing cells in the outflow tract and seems to act via RHOA signaling to regulate this process. Required for cell surface localization of FZD3 and FZD6 in the inner ear. This Homo sapiens (Human) protein is Vang-like protein 2 (VANGL2).